The primary structure comprises 203 residues: Probable proteasome subunit beta type-4 (203 aa).

Belongs to the peptidase T1B family. In terms of assembly, the 26S proteasome consists of a 20S proteasome core and two 19S regulatory subunits. The 20S proteasome core is composed of 28 subunits that are arranged in four stacked rings, resulting in a barrel-shaped structure. The two end rings are each formed by seven alpha subunits, and the two central rings are each formed by seven beta subunits. The catalytic chamber with the active sites is on the inside of the barrel.

The protein localises to the cytoplasm. It localises to the nucleus. In terms of biological role, non-catalytic component of the proteasome, a multicatalytic proteinase complex which is characterized by its ability to cleave peptides with Arg, Phe, Tyr, Leu, and Glu adjacent to the leaving group at neutral or slightly basic pH. The proteasome has an ATP-dependent proteolytic activity. This is Probable proteasome subunit beta type-4 (pcb-4) from Neurospora crassa (strain ATCC 24698 / 74-OR23-1A / CBS 708.71 / DSM 1257 / FGSC 987).